We begin with the raw amino-acid sequence, 473 residues long: Lactate utilization protein B (473 aa).

4Fe-4S ferredoxin-type domains are found at residues 302–332 (GSEF…GHSY) and 351–380 (YDDY…LHDL). Residues Cys311, Cys314, Cys317, Cys321, Cys364, Cys367, and Cys371 each coordinate [4Fe-4S] cluster.

This sequence belongs to the LutB/YkgF family.

In terms of biological role, is involved in L-lactate degradation and allows cells to grow with lactate as the sole carbon source. Has probably a role as an electron transporter during oxidation of L-lactate. The protein is Lactate utilization protein B of Bacillus anthracis (strain A0248).